Reading from the N-terminus, the 289-residue chain is Enoyl-CoA delta isomerase 1, mitochondrial (289 aa).

The N-terminal 28 residues, 1–28, are a transit peptide targeting the mitochondrion; it reads MALAAARRLLLHAGSRLGRREAVDGARR. Residue Lys-48 is modified to N6-acetyllysine; alternate. Lys-48 bears the N6-succinyllysine; alternate mark. Lys-71 carries the post-translational modification N6-succinyllysine. Lys-76 is modified (N6-acetyllysine). Substrate is bound by residues 93–97, Gly-140, and Asn-164; that span reads AGLDL. Residues Lys-222, Lys-229, Lys-255, and Lys-270 each carry the N6-acetyllysine; alternate modification. Residues Lys-222, Lys-229, Lys-255, and Lys-270 each carry the N6-succinyllysine; alternate modification. Lys-275 carries the N6-succinyllysine modification. Lys-283 is subject to N6-acetyllysine; alternate. Lys-283 carries the post-translational modification N6-succinyllysine; alternate.

Belongs to the enoyl-CoA hydratase/isomerase family. In terms of assembly, homotrimer.

Its subcellular location is the mitochondrion matrix. It carries out the reaction a (3Z)-enoyl-CoA = a 4-saturated (2E)-enoyl-CoA. It catalyses the reaction a (3E)-enoyl-CoA = a 4-saturated (2E)-enoyl-CoA. The enzyme catalyses (3Z)-octenoyl-CoA = (2E)-octenoyl-CoA. The catalysed reaction is (2E)-tetradecenoyl-CoA = (3Z)-tetradecenoyl-CoA. It carries out the reaction (3Z)-dodecenoyl-CoA = (2E)-dodecenoyl-CoA. It catalyses the reaction (3Z)-hexenoyl-CoA = (2E)-hexenoyl-CoA. The enzyme catalyses (3Z)-decenoyl-CoA = (2E)-decenoyl-CoA. It participates in lipid metabolism; fatty acid beta-oxidation. Its function is as follows. Key enzyme of fatty acid beta-oxidation. Able to isomerize both 3-cis (3Z) and 3-trans (3E) double bonds into the 2-trans (2E) form in a range of enoyl-CoA species, with a preference for (3Z)-enoyl-CoAs over (3E)-enoyl-CoAs. The catalytic efficiency of this enzyme is not affected by the fatty acyl chain length. The sequence is that of Enoyl-CoA delta isomerase 1, mitochondrial from Mus musculus (Mouse).